The primary structure comprises 741 residues: Oosporein cluster regulator OpS3 (741 aa).

A disordered region spans residues 16 to 39 (GRPARGQSTTTRSRNTQQSAPTSQ). Positions 20–34 (RGQSTTTRSRNTQQS) are enriched in low complexity. Positions 44-69 (CRRCRQHRIKCSEKPCEPCRANNSKC) form a DNA-binding region, zn(2)-C6 fungal-type. Residues 139 to 167 (HPNTPNSCPSQSGDIRQQQIPCSQHASPA) form a disordered region. Residues 473 to 500 (TAGQSMARLSETIRQLETALDELPEQLL) are a coiled coil. A disordered region spans residues 501-528 (TRHGSRTPTNNGQTHRSRPTCSTMPHTN). Over residues 506-528 (RTPTNNGQTHRSRPTCSTMPHTN) the composition is skewed to polar residues.

The protein resides in the nucleus. Functionally, transcription factor involved in regulation of gene cluster that mediates the biosynthesis of oosporein, a metabolite required for fungal virulence that acts by evading host immunity to facilitate fungal multiplication in insects. Binds oosporein cluster genes at a conserved 5'-CGGA-3' motif with the exception of OpS5. The presence of this motif in the OpS3 promoter would suggest the formation of a positive feedback loop for self-activation. The protein is Oosporein cluster regulator OpS3 of Beauveria bassiana (strain ARSEF 2860) (White muscardine disease fungus).